Reading from the N-terminus, the 344-residue chain is MTLPRPTSPHIRGPLRTPAIMRLVLGACVPGLFTLTWLYGAGTLLNLAWAGLVALACEAAMLALRKRPPGMFLKDGSALVTALLLAVALPPCAPWLLTLVATGFALIFGKHLYGGLGQNPFNPAMLGYVVALVSFPLEMTRWPSPGSAPGLADSLHAFLGLAVQPDAWAHATALDVLKTDRSLTVDELFAADPAFGHLGGAGGEWVNLAFLLGGLFLLWRRLFTWHAPLGMLAGLFAMSLLFWNGSGSDSHGSPLFHLFSGATMLGAFFIVTDPVSGATSNRGRLLFGLGVGVLTYLIRAWGGYPDGVAFAVLLMNLAAPTIDYYTRPRTYGHRKAERGFRRGD.

The next 4 membrane-spanning stretches (helical) occupy residues 23-43, 44-64, 80-100, and 120-140; these read LVLGACVPGLFTLTWLYGAGT, LLNLAWAGLVALACEAAMLAL, VTALLLAVALPPCAPWLLTLV, and PFNPAMLGYVVALVSFPLEMT. At threonine 172 the chain carries FMN phosphoryl threonine. 5 helical membrane passes run 198–218, 222–242, 252–272, 285–305, and 306–326; these read LGGAGGEWVNLAFLLGGLFLL, LFTWHAPLGMLAGLFAMSLLF, GSPLFHLFSGATMLGAFFIVT, LLFGLGVGVLTYLIRAWGGYP, and DGVAFAVLLMNLAAPTIDYYT.

Belongs to the NqrB/RnfD family. The complex is composed of six subunits: RnfA, RnfB, RnfC, RnfD, RnfE and RnfG. It depends on FMN as a cofactor.

It localises to the cell inner membrane. In terms of biological role, part of a membrane-bound complex that couples electron transfer with translocation of ions across the membrane. This is Ion-translocating oxidoreductase complex subunit D from Pseudomonas paraeruginosa (strain DSM 24068 / PA7) (Pseudomonas aeruginosa (strain PA7)).